A 172-amino-acid polypeptide reads, in one-letter code: Small ribosomal subunit protein uS5 (172 aa).

Residues 11 to 74 (LSEVLVDVNR…QAAKKRMMKV (64 aa)) enclose the S5 DRBM domain.

The protein belongs to the universal ribosomal protein uS5 family. As to quaternary structure, part of the 30S ribosomal subunit. Contacts proteins S4 and S8.

With S4 and S12 plays an important role in translational accuracy. In terms of biological role, located at the back of the 30S subunit body where it stabilizes the conformation of the head with respect to the body. The sequence is that of Small ribosomal subunit protein uS5 from Rickettsia canadensis (strain McKiel).